Consider the following 227-residue polypeptide: tRNA (guanine-N(1)-)-methyltransferase (227 aa).

Residues glycine 110 and 129–134 (IGDYVL) each bind S-adenosyl-L-methionine.

Belongs to the RNA methyltransferase TrmD family. In terms of assembly, homodimer.

Its subcellular location is the cytoplasm. The enzyme catalyses guanosine(37) in tRNA + S-adenosyl-L-methionine = N(1)-methylguanosine(37) in tRNA + S-adenosyl-L-homocysteine + H(+). Specifically methylates guanosine-37 in various tRNAs. The protein is tRNA (guanine-N(1)-)-methyltransferase of Mycoplasmopsis synoviae (strain 53) (Mycoplasma synoviae).